A 560-amino-acid chain; its full sequence is DNA ligase B (560 aa).

Lysine 124 functions as the N6-AMP-lysine intermediate in the catalytic mechanism.

It belongs to the NAD-dependent DNA ligase family. LigB subfamily.

The enzyme catalyses NAD(+) + (deoxyribonucleotide)n-3'-hydroxyl + 5'-phospho-(deoxyribonucleotide)m = (deoxyribonucleotide)n+m + AMP + beta-nicotinamide D-nucleotide.. Its function is as follows. Catalyzes the formation of phosphodiester linkages between 5'-phosphoryl and 3'-hydroxyl groups in double-stranded DNA using NAD as a coenzyme and as the energy source for the reaction. This is DNA ligase B from Shigella flexneri.